The following is an 891-amino-acid chain: DNA mismatch repair protein MutS (891 aa).

634 to 641 (GPNMGGKS) provides a ligand contact to ATP.

Belongs to the DNA mismatch repair MutS family.

This protein is involved in the repair of mismatches in DNA. It is possible that it carries out the mismatch recognition step. This protein has a weak ATPase activity. In Burkholderia mallei (strain NCTC 10247), this protein is DNA mismatch repair protein MutS.